The following is a 464-amino-acid chain: Phosphoglucosamine mutase (464 aa).

Ser112 (phosphoserine intermediate) is an active-site residue. Positions 112, 252, 254, and 256 each coordinate Mg(2+). A Phosphoserine modification is found at Ser112.

The protein belongs to the phosphohexose mutase family. The cofactor is Mg(2+). Post-translationally, activated by phosphorylation.

It catalyses the reaction alpha-D-glucosamine 1-phosphate = D-glucosamine 6-phosphate. Functionally, catalyzes the conversion of glucosamine-6-phosphate to glucosamine-1-phosphate. The chain is Phosphoglucosamine mutase from Synechococcus sp. (strain CC9902).